The primary structure comprises 206 residues: Large ribosomal subunit protein uL4 (206 aa).

Positions 47 to 94 are disordered; the sequence is NRAQKGRSEIAKSTRKPFRQKGTGNARAGMASSPLWRGGGKIFPNSPD.

Belongs to the universal ribosomal protein uL4 family. As to quaternary structure, part of the 50S ribosomal subunit.

In terms of biological role, one of the primary rRNA binding proteins, this protein initially binds near the 5'-end of the 23S rRNA. It is important during the early stages of 50S assembly. It makes multiple contacts with different domains of the 23S rRNA in the assembled 50S subunit and ribosome. Functionally, forms part of the polypeptide exit tunnel. The polypeptide is Large ribosomal subunit protein uL4 (Azoarcus sp. (strain BH72)).